The primary structure comprises 345 residues: HTH-type transcriptional regulator reg1 (345 aa).

The region spanning 1-58 (MTTRLADIAAQAGVSEATVSRVLNGKPGVAATTRQSVLAALDVLGYERPVRLRRRSAG) is the HTH lacI-type domain. Residues 5-24 (LADIAAQAGVSEATVSRVLN) constitute a DNA-binding region (H-T-H motif).

Functionally, transcription repressor involved in control of expression of alpha-amylase and chitinase genes and of actinorhodin production. This is HTH-type transcriptional regulator reg1 (reg1) from Streptomyces lividans.